The primary structure comprises 676 residues: Potassium-transporting ATPase ATP-binding subunit (676 aa).

4 consecutive transmembrane segments (helical) span residues 24 to 44 (NPVMFVVYLGALITTILCFYP), 45 to 65 (MGIPLWFNISITIFLWLTLLF), 212 to 232 (IFLITLTIIFLTVSITLVPFT), and 246 to 266 (SLVIVIALLICLAPTTIGALI). Aspartate 302 serves as the catalytic 4-aspartylphosphate intermediate. Residues aspartate 339, glutamate 343, 372-379 (FSAKTRMS), and lysine 390 each bind ATP. Residues aspartate 513 and aspartate 517 each coordinate Mg(2+). Helical transmembrane passes span 573–593 (FSIANDIAKYFAVIPVLFYSI), 611–631 (AILSAVIYNAVVIVALIPLAL), and 656–676 (GIIAPFIFIKIIDLILSLIIL).

This sequence belongs to the cation transport ATPase (P-type) (TC 3.A.3) family. Type IA subfamily. The system is composed of three essential subunits: KdpA, KdpB and KdpC.

The protein localises to the cell membrane. It carries out the reaction K(+)(out) + ATP + H2O = K(+)(in) + ADP + phosphate + H(+). Part of the high-affinity ATP-driven potassium transport (or Kdp) system, which catalyzes the hydrolysis of ATP coupled with the electrogenic transport of potassium into the cytoplasm. This subunit is responsible for energy coupling to the transport system and for the release of the potassium ions to the cytoplasm. This chain is Potassium-transporting ATPase ATP-binding subunit, found in Enterococcus faecalis (strain ATCC 700802 / V583).